A 276-amino-acid chain; its full sequence is Sec-independent protein translocase protein TatC (276 aa).

The interval 1–29 (MVSLTSVPPYADATPDTRASSGPAPGRRK) is disordered. Helical transmembrane passes span 49-69 (GGLV…LVLL), 103-123 (LFLA…AFVT), 136-156 (GFLG…WWVL), 187-207 (LVLA…LNLA), 221-241 (WAVL…DALT), and 242-262 (MVLV…VAVW).

Belongs to the TatC family. As to quaternary structure, the Tat system comprises two distinct complexes: a TatABC complex, containing multiple copies of TatA, TatB and TatC subunits, and a separate TatA complex, containing only TatA subunits. Substrates initially bind to the TatABC complex, which probably triggers association of the separate TatA complex to form the active translocon.

The protein localises to the cell membrane. Part of the twin-arginine translocation (Tat) system that transports large folded proteins containing a characteristic twin-arginine motif in their signal peptide across membranes. Together with TatB, TatC is part of a receptor directly interacting with Tat signal peptides. The sequence is that of Sec-independent protein translocase protein TatC from Xylanimonas cellulosilytica (strain DSM 15894 / JCM 12276 / CECT 5975 / KCTC 9989 / LMG 20990 / NBRC 107835 / XIL07).